We begin with the raw amino-acid sequence, 620 residues long: MENENKPNVANFEAAVAAKDYEKACSELLLILSQLDSNFGGIHEIEFEYPAQLQDLEQEKIVYFCTRMATAITTLFSDPVLEISDLGVQRFLVYQRWLALIFASSPFVNADHILQTYNREPNRKNSLEIHLDSSKSSLIKFCILYLPESNVNLNLDVMWNISPELCASLCFALQSPRFVGTSTAFNKRATILQWFPRHLDQLKNLNNIPSAISHDVYMHCSYDTSVNKHDVKRALNHVIRRHIESEYGWKDRDVAHIGYRNNKPVMVVLLEHFHSAHSIYRTHSTSMIAAREHFYLIGLGSPSVDQAGQEVFDEFHLVAGDNMKQKLEFIRSVCESNGAAIFYMPSIGMDMTTIFASNTRLAPIQAIALGHPATTHSDFIEYVIVEDDYVGSEECFSETLLRLPKDALPYVPSALAPEKVDYLLRENPEVVNIGIASTTMKLNPYFLEALKAIRDRAKVKVHFHFALGQSNGITHPYVERFIKSYLGDSATAHPHSPYHQYLRILHNCDMMVNPFPFGNTNGIIDMVTLGLVGVCKTGAEVHEHIDEGLFKRLGLPEWLIANTVDEYVERAVRLAENHQERLELRRYIIENNGLNTLFTGDPRPMGQVFLEKLNAFLKEN.

Belongs to the glycosyltransferase 41 family.

It localises to the cytoplasm. It catalyses the reaction L-asparaginyl-[protein] + UDP-alpha-D-glucose = N(4)-(beta-D-glucosyl)-L-asparaginyl-[protein] + UDP + H(+). Its pathway is protein modification; protein glycosylation. Functionally, inverting glycosyltransferase that catalyzes the transfer of one glucose moiety from UDP-glucose to an asparagine residue in peptides and proteins containing the NX(S/T) motif, resulting in their modification with a beta-linked 1,N-glucose. Likely acts as a key component of a general protein glycosylation system. This Actinobacillus pleuropneumoniae serotype 5b (strain L20) protein is UDP-glucose:protein N-beta-glucosyltransferase.